A 451-amino-acid polypeptide reads, in one-letter code: UDP-N-acetylmuramate--L-alanine ligase (451 aa).

ATP is bound at residue 110-116; it reads GTHGKTT.

Belongs to the MurCDEF family.

The protein localises to the cytoplasm. The catalysed reaction is UDP-N-acetyl-alpha-D-muramate + L-alanine + ATP = UDP-N-acetyl-alpha-D-muramoyl-L-alanine + ADP + phosphate + H(+). It participates in cell wall biogenesis; peptidoglycan biosynthesis. In terms of biological role, cell wall formation. This chain is UDP-N-acetylmuramate--L-alanine ligase, found in Francisella tularensis subsp. holarctica (strain FTNF002-00 / FTA).